Consider the following 1826-residue polypeptide: Protein TIC 214 (1826 aa).

The next 5 membrane-spanning stretches (helical) occupy residues 18–38, 67–87, 127–147, 175–195, and 221–241; these read IINSVVVVGLYYGFLTTFSIG, FITGQLMMFISIYYAPLHLAL, LSIQCVFLNNLIFQLFNHFIL, VGWLIGHILFMKWVGLVLVWI, and IFSILLFITCVYYLGRIPSPI. Residues 250 to 308 form a disordered region; that stretch reads TEEGWESEEETDVEIETASETKGTKQEQEGSTEEDPSPSLFSEEKEDPDKIDETEEIRV. 2 stretches are compositionally biased toward acidic residues: residues 252 to 266 and 293 to 304; these read EGWESEEETDVEIET and EKEDPDKIDETE. Residues 774–794 traverse the membrane as a helical segment; it reads LILIIQSIFRKYILLPSLIIV. The segment at 1032-1057 is disordered; that stretch reads TKGLMKEKNSNAKKRGSPNKTSFNRK. Residues 1042 to 1057 are compositionally biased toward basic residues; sequence NAKKRGSPNKTSFNRK. A helical membrane pass occupies residues 1081–1101; it reads FYLFITIFIKRIYIDIFVCII.

The protein belongs to the TIC214 family. As to quaternary structure, part of the Tic complex.

It localises to the plastid. The protein resides in the chloroplast inner membrane. In terms of biological role, involved in protein precursor import into chloroplasts. May be part of an intermediate translocation complex acting as a protein-conducting channel at the inner envelope. In Daucus carota (Wild carrot), this protein is Protein TIC 214.